A 72-amino-acid chain; its full sequence is Gene 42 protein (72 aa).

The protein is Gene 42 protein (42) of Mycobacterium phage L5 (Mycobacteriophage L5).